The primary structure comprises 373 residues: ATP phosphoribosyltransferase regulatory subunit (373 aa).

The protein belongs to the class-II aminoacyl-tRNA synthetase family. HisZ subfamily. Heteromultimer composed of HisG and HisZ subunits.

Its subcellular location is the cytoplasm. It participates in amino-acid biosynthesis; L-histidine biosynthesis; L-histidine from 5-phospho-alpha-D-ribose 1-diphosphate: step 1/9. Functionally, required for the first step of histidine biosynthesis. May allow the feedback regulation of ATP phosphoribosyltransferase activity by histidine. The chain is ATP phosphoribosyltransferase regulatory subunit from Rhizobium etli (strain ATCC 51251 / DSM 11541 / JCM 21823 / NBRC 15573 / CFN 42).